The sequence spans 183 residues: Putative 3-methyladenine DNA glycosylase (183 aa).

This sequence belongs to the DNA glycosylase MPG family.

In Legionella pneumophila (strain Corby), this protein is Putative 3-methyladenine DNA glycosylase.